A 669-amino-acid polypeptide reads, in one-letter code: MNEKESNILRMQELIEELNKYSYSYYVLDNPIVADKEYDKRYDELVELEEKTGITYPYSPTNRVGDVILKQFQKYTHKSRLWSLDKAQSFEEIIDWHNRNKKAVAEYNSNHEDKLPELKYVLTKKFDGLTINCTYDESGVMIKAATRGTGVIGEDITSQAKTIKSIPLKIKNGSVVEVHGEAIMTKTAFNEYNKKAEVPLKNLRNGAAGALRNLNVRETARRNLSAFFYDVGYNEGKAFKSYMEMMNFIKEMGFPVDEYLKECNTIEEINKEIQYVGDIRSSLDYDIDGVVIVIDDYRTREYLGYTVKFPKWAIAYKFEAEEATTKLLDVEWNVGRSGRVSPTAILEPVELAGVIVKRATLNNMDDIGRKKVKIGSRVFVRRSNDVIPEIMGVTEETEGETNEIEAPTICPYCGSEIVKEGVHLFCENTLSCKPQMVKSIVHFASREAMNIEGFSEKTAEQLFEKLNIKSISDLYRITKEELMSLDKFKDKKASNLINAIEKSKKCDLASFVYSLGIPNVGKKTATDLCKQFKSFENIKKASYDELILVQDIGSIVAESIVEFFKQEKIEKSLNELFELGVTPFYEESEVVENAFTGKTVVATGTLQNYSRTAIKEKLESLGANVAGSVSKKTDYVIAGENAGSKYDKAVQLGVKILTEEEFEQLINNM.

Residues 35 to 39 (DKEYD) and 83 to 84 (SL) each bind NAD(+). K125 serves as the catalytic N6-AMP-lysine intermediate. R147, E181, and K317 together coordinate NAD(+). Residues C410, C413, C426, and C432 each coordinate Zn(2+). In terms of domain architecture, BRCT spans 590–669 (VVENAFTGKT…EEFEQLINNM (80 aa)).

It belongs to the NAD-dependent DNA ligase family. LigA subfamily. It depends on Mg(2+) as a cofactor. Requires Mn(2+) as cofactor.

The catalysed reaction is NAD(+) + (deoxyribonucleotide)n-3'-hydroxyl + 5'-phospho-(deoxyribonucleotide)m = (deoxyribonucleotide)n+m + AMP + beta-nicotinamide D-nucleotide.. DNA ligase that catalyzes the formation of phosphodiester linkages between 5'-phosphoryl and 3'-hydroxyl groups in double-stranded DNA using NAD as a coenzyme and as the energy source for the reaction. It is essential for DNA replication and repair of damaged DNA. The polypeptide is DNA ligase 2 (Clostridium acetobutylicum (strain ATCC 824 / DSM 792 / JCM 1419 / IAM 19013 / LMG 5710 / NBRC 13948 / NRRL B-527 / VKM B-1787 / 2291 / W)).